The sequence spans 246 residues: Envelope glycoprotein gp95 (246 aa).

At 1–192 the chain is on the extracellular side; the sequence is IPSRPVGGPC…EWAVHLLKGL (192 aa). Asn31 is a glycosylation site (N-linked (GlcNAc...) asparagine; by host). An intrachain disulfide couples Cys50 to Cys86. The fusion peptide stretch occupies residues 58–78; it reads GPTARIFASILAPGVAAAQAL. Positions 75 to 125 form a coiled coil; it reads AQALKEIERLACWSVKQANLTTSLLGDLLDDVTSIRHAVLQNRAAIDFLLL. N-linked (GlcNAc...) asparagine; by host glycosylation is present at Asn93. The tract at residues 114–130 is immunosuppression; the sequence is LQNRAAIDFLLLAHGHG. Residues Cys131 and Cys138 are joined by a disulfide bond. N-linked (GlcNAc...) asparagine; by host glycosylation is present at Asn141. Residues 143-173 adopt a coiled-coil conformation; it reads SDHSESIQKKFQLMKEHVNKIGVDSDPIGSW. A helical transmembrane segment spans residues 193-213; sequence LLGLVVILLLVVCLPCLLQIV. S-palmitoyl cysteine; by host attachment occurs at residues Cys205 and Cys208. Residues 214–246 lie on the Cytoplasmic side of the membrane; the sequence is CGNIRKMINNSISYHTEYKKLQKAYGQPESRIV.

This sequence belongs to the Alpharetroviruses envelope glycoprotein family. Heterodimer with the transmembrane protein. The mature envelope protein (Env) consists of a trimer of SU-TM heterodimers attached by a labile interchain disulfide bond. In terms of assembly, heterodimer with the surface protein. The mature envelope protein (Env) consists of a trimer of SU-TM heterodimers attached by a labile interchain disulfide bond. In terms of processing, specific enzymatic cleavages in vivo yield mature proteins. Envelope glycoproteins are synthesized as an inactive precursor that is N-glycosylated and processed likely by host cell furin or by a furin-like protease in the Golgi to yield the mature SU and TM proteins. The cleavage site between SU and TM requires the minimal sequence [KR]-X-[KR]-R. Post-translationally, the transmembrane protein is palmitoylated. Palmitoylation is necessary for glycoprotein function and infectivity.

Its subcellular location is the virion membrane. It localises to the host cell membrane. In terms of biological role, the surface protein (SU) attaches the virus to the host cell by binding to its receptor. This interaction triggers the refolding of the transmembrane protein (TM) thereby unmasking its fusion peptide and the formation of a reactive thiolate to activate its fusogenic potential. Fusion occurs at the host cell plasma membrane. The transmembrane protein (TM) acts as a class I viral fusion protein. Under the current model, the protein has at least 3 conformational states: pre-fusion native state, pre-hairpin intermediate state, and post-fusion hairpin state. During viral and target cell membrane fusion, the coiled coil regions (heptad repeats) assume a trimer-of-hairpins structure, positioning the fusion peptide in close proximity to the C-terminal region of the ectodomain. The formation of this structure appears to drive apposition and subsequent fusion of viral and target cell membranes. Membranes fusion leads to delivery of the nucleocapsid into the cytoplasm. In Galliformes, this protein is Envelope glycoprotein gp95 (env).